We begin with the raw amino-acid sequence, 868 residues long: DNA replication licensing factor MCM2 (868 aa).

Disordered stretches follow at residues 1–65 (MSDN…DEVE) and 87–106 (NRDR…ELSL). Phosphoserine is present on residues Ser-14, Ser-16, and Ser-23. Over residues 49 to 65 (EGDDNEVDDVPDIDEVE) the composition is skewed to acidic residues. 2 positions are modified to phosphoserine: Ser-164 and Ser-170. A C4-type zinc finger spans residues 341–367 (CLKCGSILGPFFQDSNEEIRISFCTNC). Positions 493–700 (IIDKIISSMA…ADERLATFVV (208 aa)) constitute an MCM domain. Position 543 to 550 (543 to 550 (GDPGTAKS)) interacts with ATP. An Arginine finger motif is present at residues 675 to 678 (SRFD). The interval 704–728 (VRSHPENDEDREGEELKNNGESAIE) is disordered.

It belongs to the MCM family. As to quaternary structure, component of the MCM2-7 complex. The complex forms a toroidal hexameric ring with the proposed subunit order MCM2-MCM6-MCM4-MCM7-MCM3-MCM5; loaded onto DNA, forms a head-head double hexamer.

The protein resides in the nucleus. It carries out the reaction ATP + H2O = ADP + phosphate + H(+). Its function is as follows. Acts as a component of the MCM2-7 complex (MCM complex) which is the putative replicative helicase essential for 'once per cell cycle' DNA replication initiation and elongation in eukaryotic cells. The active ATPase sites in the MCM2-7 ring are formed through the interaction surfaces of two neighboring subunits such that a critical structure of a conserved arginine finger motif is provided in trans relative to the ATP-binding site of the Walker A box of the adjacent subunit. The six ATPase active sites, however, are likely to contribute differentially to the complex helicase activity; specifically the MCM2-MCM5 association is proposed to be reversible and to mediate a open ring conformation which may facilitate DNA loading. Once loaded onto DNA, double hexamers can slide on dsDNA in the absence of ATPase activity. Necessary for cell growth. This Saccharomyces cerevisiae (strain ATCC 204508 / S288c) (Baker's yeast) protein is DNA replication licensing factor MCM2 (MCM2).